We begin with the raw amino-acid sequence, 251 residues long: Probable transcriptional regulatory protein Pmob_0807 (251 aa).

The tract at residues 1–22 (MSGHNKWANIKHRKGAQDAKRS) is disordered.

It belongs to the TACO1 family.

Its subcellular location is the cytoplasm. In Petrotoga mobilis (strain DSM 10674 / SJ95), this protein is Probable transcriptional regulatory protein Pmob_0807.